The sequence spans 353 residues: Nicotinate-nucleotide--dimethylbenzimidazole phosphoribosyltransferase (353 aa).

E320 serves as the catalytic Proton acceptor.

This sequence belongs to the CobT family.

The catalysed reaction is 5,6-dimethylbenzimidazole + nicotinate beta-D-ribonucleotide = alpha-ribazole 5'-phosphate + nicotinate + H(+). It functions in the pathway nucleoside biosynthesis; alpha-ribazole biosynthesis; alpha-ribazole from 5,6-dimethylbenzimidazole: step 1/2. In terms of biological role, catalyzes the synthesis of alpha-ribazole-5'-phosphate from nicotinate mononucleotide (NAMN) and 5,6-dimethylbenzimidazole (DMB). In Pseudoalteromonas translucida (strain TAC 125), this protein is Nicotinate-nucleotide--dimethylbenzimidazole phosphoribosyltransferase.